The sequence spans 599 residues: Cytadherence high molecular weight protein 3 (599 aa).

The span at 220–236 (VQVDSGSQNHSFNNSPS) shows a compositional bias: polar residues. Residues 220–241 (VQVDSGSQNHSFNNSPSLKPPL) form a disordered region.

The protein resides in the cell projection. It localises to the attachment organelle membrane. Component of the cytoskeleton-like structure which stabilizes the shape of the wall-less mycoplasma. This cytoskeleton-like network of accessory proteins containing HMW proteins 1 to 5 allows the proper anchoring of cytadhesin proteins in the mycoplasmal membrane at the attachment organelle. Essential for successful surface parasitism. The chain is Cytadherence high molecular weight protein 3 (hmw3) from Mycoplasma genitalium (strain ATCC 33530 / DSM 19775 / NCTC 10195 / G37) (Mycoplasmoides genitalium).